Here is a 158-residue protein sequence, read N- to C-terminus: RNA pyrophosphohydrolase (158 aa).

The Nudix hydrolase domain maps to glycine 6–glutamine 150. Residues glycine 39–glycine 60 carry the Nudix box motif.

It belongs to the Nudix hydrolase family. RppH subfamily. A divalent metal cation serves as cofactor.

Functionally, accelerates the degradation of transcripts by removing pyrophosphate from the 5'-end of triphosphorylated RNA, leading to a more labile monophosphorylated state that can stimulate subsequent ribonuclease cleavage. In Blochmanniella pennsylvanica (strain BPEN), this protein is RNA pyrophosphohydrolase.